We begin with the raw amino-acid sequence, 374 residues long: Methylthioribose-1-phosphate isomerase (374 aa).

Ser2 bears the N-acetylserine mark. Asp253 functions as the Proton donor in the catalytic mechanism.

This sequence belongs to the eIF-2B alpha/beta/delta subunits family. MtnA subfamily.

It is found in the cytoplasm. The protein resides in the nucleus. It catalyses the reaction 5-(methylsulfanyl)-alpha-D-ribose 1-phosphate = 5-(methylsulfanyl)-D-ribulose 1-phosphate. The protein operates within amino-acid biosynthesis; L-methionine biosynthesis via salvage pathway; L-methionine from S-methyl-5-thio-alpha-D-ribose 1-phosphate: step 1/6. In terms of biological role, catalyzes the interconversion of methylthioribose-1-phosphate (MTR-1-P) into methylthioribulose-1-phosphate (MTRu-1-P). This is Methylthioribose-1-phosphate isomerase from Arabidopsis thaliana (Mouse-ear cress).